Reading from the N-terminus, the 493-residue chain is Probable UTP--glucose-1-phosphate uridylyltransferase (493 aa).

UTP is bound by residues 105-108 (LTGK), Gln181, Gly211, and Asp242. 107-108 (GK) is a binding site for substrate. 240–242 (NVD) is a binding site for substrate.

Belongs to the UDPGP type 1 family.

The catalysed reaction is alpha-D-glucose 1-phosphate + UTP + H(+) = UDP-alpha-D-glucose + diphosphate. Functionally, plays a central role as a glucosyl donor in cellular metabolic pathways. The sequence is that of Probable UTP--glucose-1-phosphate uridylyltransferase from Saccharomyces cerevisiae (strain ATCC 204508 / S288c) (Baker's yeast).